A 367-amino-acid chain; its full sequence is Cobalt-precorrin-5B C(1)-methyltransferase (367 aa).

The protein belongs to the CbiD family.

It carries out the reaction Co-precorrin-5B + S-adenosyl-L-methionine = Co-precorrin-6A + S-adenosyl-L-homocysteine. It participates in cofactor biosynthesis; adenosylcobalamin biosynthesis; cob(II)yrinate a,c-diamide from sirohydrochlorin (anaerobic route): step 6/10. Functionally, catalyzes the methylation of C-1 in cobalt-precorrin-5B to form cobalt-precorrin-6A. The protein is Cobalt-precorrin-5B C(1)-methyltransferase of Leptospira interrogans serogroup Icterohaemorrhagiae serovar copenhageni (strain Fiocruz L1-130).